The sequence spans 147 residues: Hemoglobin subunit epsilon (147 aa).

The Globin domain occupies 3-147 (HFTAEEKAAI…VAIALGHKYH (145 aa)). Residues Ser14 and Ser51 each carry the phosphoserine modification. 2 residues coordinate heme b: His64 and His93.

This sequence belongs to the globin family. Heterotetramer of two alpha chains and two epsilon chains in early embryonic hemoglobin Gower-2; two zeta chains and two epsilon chains in early embryonic hemoglobin Gower-1. As to expression, red blood cells.

Its function is as follows. The epsilon chain is a beta-type chain of early mammalian embryonic hemoglobin. This is Hemoglobin subunit epsilon (HBE1) from Alouatta belzebul (Red-handed howler monkey).